The following is a 416-amino-acid chain: Dihydrolipoyllysine-residue succinyltransferase component of 2-oxoglutarate dehydrogenase complex (416 aa).

The Lipoyl-binding domain maps to 3–78; sequence IVDVKVPQLS…VADEIIAKID (76 aa). The residue at position 44 (Lys44) is an N6-lipoyllysine. The Peripheral subunit-binding (PSBD) domain occupies 115-152; the sequence is VAMPSAAKLMAEAGLSAGQVAGTGKDGRITKGDALAAA. Residues His387 and Asp391 contribute to the active site.

The protein belongs to the 2-oxoacid dehydrogenase family. In terms of assembly, forms a 24-polypeptide structural core with octahedral symmetry. Part of the 2-oxoglutarate dehydrogenase (OGDH) complex composed of E1 (2-oxoglutarate dehydrogenase), E2 (dihydrolipoamide succinyltransferase) and E3 (dihydrolipoamide dehydrogenase); the complex contains multiple copies of the three enzymatic components (E1, E2 and E3). (R)-lipoate serves as cofactor.

The enzyme catalyses N(6)-[(R)-dihydrolipoyl]-L-lysyl-[protein] + succinyl-CoA = N(6)-[(R)-S(8)-succinyldihydrolipoyl]-L-lysyl-[protein] + CoA. It participates in amino-acid degradation; L-lysine degradation via saccharopine pathway; glutaryl-CoA from L-lysine: step 6/6. Its function is as follows. E2 component of the 2-oxoglutarate dehydrogenase (OGDH) complex which catalyzes the second step in the conversion of 2-oxoglutarate to succinyl-CoA and CO(2). This Cupriavidus necator (strain ATCC 17699 / DSM 428 / KCTC 22496 / NCIMB 10442 / H16 / Stanier 337) (Ralstonia eutropha) protein is Dihydrolipoyllysine-residue succinyltransferase component of 2-oxoglutarate dehydrogenase complex (sucB).